Consider the following 365-residue polypeptide: UDP-N-acetylglucosamine--N-acetylmuramyl-(pentapeptide) pyrophosphoryl-undecaprenol N-acetylglucosamine transferase (365 aa).

UDP-N-acetyl-alpha-D-glucosamine is bound by residues 19–21, asparagine 131, arginine 170, serine 201, isoleucine 255, 274–279, and glutamine 300; these read TGG and ALTVTE.

Belongs to the glycosyltransferase 28 family. MurG subfamily.

Its subcellular location is the cell inner membrane. It catalyses the reaction di-trans,octa-cis-undecaprenyl diphospho-N-acetyl-alpha-D-muramoyl-L-alanyl-D-glutamyl-meso-2,6-diaminopimeloyl-D-alanyl-D-alanine + UDP-N-acetyl-alpha-D-glucosamine = di-trans,octa-cis-undecaprenyl diphospho-[N-acetyl-alpha-D-glucosaminyl-(1-&gt;4)]-N-acetyl-alpha-D-muramoyl-L-alanyl-D-glutamyl-meso-2,6-diaminopimeloyl-D-alanyl-D-alanine + UDP + H(+). It participates in cell wall biogenesis; peptidoglycan biosynthesis. Cell wall formation. Catalyzes the transfer of a GlcNAc subunit on undecaprenyl-pyrophosphoryl-MurNAc-pentapeptide (lipid intermediate I) to form undecaprenyl-pyrophosphoryl-MurNAc-(pentapeptide)GlcNAc (lipid intermediate II). This chain is UDP-N-acetylglucosamine--N-acetylmuramyl-(pentapeptide) pyrophosphoryl-undecaprenol N-acetylglucosamine transferase, found in Acinetobacter baumannii (strain ACICU).